The primary structure comprises 423 residues: Gamma-glutamyl phosphate reductase (423 aa).

Low complexity predominate over residues 1–14; it reads MTLQAAPRSAAAQQ. Positions 1–25 are disordered; sequence MTLQAAPRSAAAQQREPDLRQEVHD. Residues 15–25 show a composition bias toward basic and acidic residues; sequence REPDLRQEVHD.

This sequence belongs to the gamma-glutamyl phosphate reductase family.

It is found in the cytoplasm. It catalyses the reaction L-glutamate 5-semialdehyde + phosphate + NADP(+) = L-glutamyl 5-phosphate + NADPH + H(+). It functions in the pathway amino-acid biosynthesis; L-proline biosynthesis; L-glutamate 5-semialdehyde from L-glutamate: step 2/2. Catalyzes the NADPH-dependent reduction of L-glutamate 5-phosphate into L-glutamate 5-semialdehyde and phosphate. The product spontaneously undergoes cyclization to form 1-pyrroline-5-carboxylate. The polypeptide is Gamma-glutamyl phosphate reductase (Mycobacterium ulcerans (strain Agy99)).